Here is a 1084-residue protein sequence, read N- to C-terminus: Siderophore biosynthesis regulatory protein URBS1 (1084 aa).

Disordered stretches follow at residues 1 to 164 (MALP…QSSS), 245 to 283 (AEEH…RDSY), and 300 to 337 (RPVH…AGMR). Positions 23 to 51 (QAAAASSSSSSSSSHHPPPRIAARPIAPA) are enriched in low complexity. Composition is skewed to polar residues over residues 97-106 (SHHNASSTAT) and 128-141 (RSQS…NRSQ). Residues 150 to 164 (PSRSQPNSPLLQSSS) show a composition bias toward low complexity. Residues 245 to 260 (AEEHAKMQRYSDEHPR) show a composition bias toward basic and acidic residues. The GATA-type 1 zinc finger occupies 338–362 (CSNCGVTSTPLWRRAPDGSTICNAC). 2 disordered regions span residues 372 to 405 (HRSA…REDD) and 442 to 472 (VSKR…KMDD). Over residues 373–385 (RSASNRLSGSDAS) the composition is skewed to polar residues. The GATA-type 2 zinc finger occupies 482-506 (CTNCQTTTTPLWRRDEDGNNICNAC). Disordered regions lie at residues 559-595 (IAPA…MREA), 643-679 (RAGA…DERD), 692-803 (THAA…TKLS), 841-940 (EAAG…SRRN), 953-1019 (AAVP…DDHW), and 1040-1084 (ARPV…APRT). 2 stretches are compositionally biased toward basic and acidic residues: residues 650–659 (RTSHPDDSRS) and 715–725 (RLGRSELHGES). Residues 752–781 (PHHHHHHHHHHANHASHAVHHGHHHHHHHP) show a composition bias toward basic residues. Residues 875-888 (RGTRSGHDSIKQEA) show a composition bias toward basic and acidic residues. Over residues 961 to 970 (SPPSTVSNPA) the composition is skewed to polar residues. Residues 1070-1084 (PVASSPSQAVSAPRT) show a composition bias toward low complexity.

Its subcellular location is the nucleus. In terms of biological role, involved in the regulation of secreted ferrichrome-type siderophores. Acts directly or indirectly to repress the biosynthesis of siderophores. The protein is Siderophore biosynthesis regulatory protein URBS1 (URBS1) of Mycosarcoma maydis (Corn smut fungus).